The primary structure comprises 690 residues: DNA-directed RNA polymerase subunit beta' (690 aa).

Residues cysteine 76, cysteine 78, cysteine 94, and cysteine 97 each contribute to the Zn(2+) site. Residues aspartate 496, aspartate 498, and aspartate 500 each coordinate Mg(2+).

This sequence belongs to the RNA polymerase beta' chain family. RpoC1 subfamily. In terms of assembly, in plastids the minimal PEP RNA polymerase catalytic core is composed of four subunits: alpha, beta, beta', and beta''. When a (nuclear-encoded) sigma factor is associated with the core the holoenzyme is formed, which can initiate transcription. It depends on Mg(2+) as a cofactor. Zn(2+) is required as a cofactor.

The protein localises to the plastid. It is found in the chloroplast. It catalyses the reaction RNA(n) + a ribonucleoside 5'-triphosphate = RNA(n+1) + diphosphate. Its function is as follows. DNA-dependent RNA polymerase catalyzes the transcription of DNA into RNA using the four ribonucleoside triphosphates as substrates. The sequence is that of DNA-directed RNA polymerase subunit beta' from Lemna minor (Common duckweed).